A 445-amino-acid polypeptide reads, in one-letter code: Rab GDP dissociation inhibitor beta (445 aa).

The residue at position 1 (Met-1) is an N-acetylmethionine. The residue at position 57 (Lys-57) is an N6-succinyllysine. Lys-112 carries the post-translational modification N6-acetyllysine. The residue at position 130 (Ser-130) is a Phosphoserine. Lys-269 carries the post-translational modification N6-acetyllysine. Phosphoserine is present on Ser-382.

Belongs to the Rab GDI family. As to quaternary structure, interacts with RHOH. Interacts with the GDP-bound inactive forms of RAB3A, RAB3B, RAB3C, RAB5A, RAB5B, RAB5C, RAB8A, RAB8B, RAB10, RAB12, RAB35, and RAB43; binds RAB3D to a lesser extent. Interacts with DZIP1; this interaction negatively regulates the interaction of GDI2 with GDP-bound RAB8A.

It localises to the cytoplasm. It is found in the membrane. The protein resides in the golgi apparatus. Its subcellular location is the trans-Golgi network. In terms of biological role, GDP-dissociation inhibitor preventing the GDP to GTP exchange of most Rab proteins. By keeping these small GTPases in their inactive GDP-bound form regulates intracellular membrane trafficking. Negatively regulates protein transport to the cilium and ciliogenesis through the inhibition of RAB8A. The polypeptide is Rab GDP dissociation inhibitor beta (GDI2) (Canis lupus familiaris (Dog)).